The primary structure comprises 156 residues: Small ribosomal subunit protein uS7 (156 aa).

This sequence belongs to the universal ribosomal protein uS7 family. In terms of assembly, part of the 30S ribosomal subunit. Contacts proteins S9 and S11.

Functionally, one of the primary rRNA binding proteins, it binds directly to 16S rRNA where it nucleates assembly of the head domain of the 30S subunit. Is located at the subunit interface close to the decoding center, probably blocks exit of the E-site tRNA. The chain is Small ribosomal subunit protein uS7 from Mesomycoplasma hyopneumoniae (strain 232) (Mycoplasma hyopneumoniae).